We begin with the raw amino-acid sequence, 1664 residues long: Cortactin-binding protein 2 (1664 aa).

Disordered regions lie at residues 1–23 (MATD…AGAA), 268–440 (QLKR…ALHP), 455–479 (GNAN…SPTS), and 495–618 (QALS…KPSI). The stretch at 119-276 (RKMQERMSTQ…EQLKRGSDSK (158 aa)) forms a coiled coil. Low complexity-rich tracts occupy residues 368–379 (SSAPTIPAASAS) and 395–407 (TSST…GTTP). An Asymmetric dimethylarginine modification is found at Arg499. ANK repeat units follow at residues 710–740 (GRPT…DTNY), 744–773 (DGHS…QVNA), 777–806 (NGFT…DVNH), 810–839 (GGQT…DRSI), 843–872 (DGWT…PARG), and 913–943 (EGWT…EPEK). A disordered region spans residues 871–900 (RGNSSNEEEPESGAFARDGGEESSEGTSEP). Residues 1447–1483 (SKKKGESGAWRKVSTSPRKKSGRFSSPIWNEPDLSPG) form a disordered region. Ser1525 is subject to Phosphoserine. The disordered stretch occupies residues 1558-1664 (RTFHSSGSNP…KHEQVEKPNT (107 aa)). Over residues 1587-1600 (PLSSHQATECSTSK) the composition is skewed to polar residues. Over residues 1625-1639 (SQNTKRSSSSSNTRQ) the composition is skewed to low complexity. Basic and acidic residues predominate over residues 1646 to 1664 (SKEENWNLHKHEQVEKPNT).

Interacts with CTTN/cortactin SH3 domain. Interacts with STRN, STRN4/zinedin and MOB4/phocein; this interactions mediate the association with the STRIPAK core complex and may regulate dendritic spine distribution of the STRIPAK complex in hippocampal neurons. Activation of glutamate receptors weakens the interaction with STRN and STRN4.

Its subcellular location is the cytoplasm. The protein localises to the cell cortex. It is found in the cell projection. The protein resides in the dendritic spine. Functionally, regulates the dendritic spine distribution of CTTN/cortactin in hippocampal neurons, and thus controls dendritic spinogenesis and dendritic spine maintenance. Associates with the striatin-interacting phosphatase and kinase (STRIPAK) core complex to regulate dendritic spine distribution of the STRIPAK complex in hippocampal neurons. This Oryctolagus cuniculus (Rabbit) protein is Cortactin-binding protein 2 (CTTNBP2).